Consider the following 91-residue polypeptide: Small ribosomal subunit protein uS19 (91 aa).

The protein belongs to the universal ribosomal protein uS19 family.

Protein S19 forms a complex with S13 that binds strongly to the 16S ribosomal RNA. The chain is Small ribosomal subunit protein uS19 from Lachnospira eligens (strain ATCC 27750 / DSM 3376 / VPI C15-48 / C15-B4) (Eubacterium eligens).